The sequence spans 67 residues: Sec-independent protein translocase protein TatA (67 aa).

Residues 1 to 21 (MFGLGGQELVLILLIVLLLFG) traverse the membrane as a helical segment.

This sequence belongs to the TatA/E family. Forms a complex with TatC.

The protein localises to the cell inner membrane. In terms of biological role, part of the twin-arginine translocation (Tat) system that transports large folded proteins containing a characteristic twin-arginine motif in their signal peptide across membranes. TatA could form the protein-conducting channel of the Tat system. The sequence is that of Sec-independent protein translocase protein TatA from Chlorobaculum tepidum (strain ATCC 49652 / DSM 12025 / NBRC 103806 / TLS) (Chlorobium tepidum).